A 314-amino-acid chain; its full sequence is Olfactory receptor 51I1 (314 aa).

Residues Met1 to Thr27 lie on the Extracellular side of the membrane. A helical membrane pass occupies residues Trp28 to Leu48. Over Thr49 to Ala56 the chain is Cytoplasmic. Residues Leu57–Phe77 traverse the membrane as a helical segment. The Extracellular segment spans residues Ser78–Val101. Cys99 and Cys191 form a disulfide bridge. Residues Gln102–Leu122 form a helical membrane-spanning segment. Residues Asp123–Asn141 are Cytoplasmic-facing. A helical transmembrane segment spans residues Arg142–Pro162. Residues Phe163 to Asn198 are Extracellular-facing. Residues Ile199–Ser219 form a helical membrane-spanning segment. Residues Tyr220 to Ala239 lie on the Cytoplasmic side of the membrane. The chain crosses the membrane as a helical span at residues Leu240–Val260. The Extracellular segment spans residues Ser261 to His275. A helical membrane pass occupies residues Val276–Val296. Topologically, residues Lys297–Ala314 are cytoplasmic.

It belongs to the G-protein coupled receptor 1 family.

It is found in the cell membrane. In terms of biological role, odorant receptor. In Homo sapiens (Human), this protein is Olfactory receptor 51I1 (OR51I1).